The sequence spans 342 residues: Forkhead box protein D5-C (342 aa).

Positions 1–89 (MNLSQDSSAH…KHSLDTTTNG (89 aa)) are disordered. The span at 20–34 (SDDEDEIDILGEDDP) shows a compositional bias: acidic residues. The span at 59-70 (SKLSCNESASHS) shows a compositional bias: polar residues. Residues 71–83 (SGERERGTSKHSL) are compositionally biased toward basic and acidic residues. The segment at residues 97-191 (KPPYSYIALI…DNGSFLRRRK (95 aa)) is a DNA-binding region (fork-head).

As to expression, at the onset of gastrulation, expressed in the superficial layer of cells in the dorsal blastopore lip (Spemann organizer). In the open neural plate, expressed in a row of cells destined to become the floor plate of the neural tube. After neural tube closure, only detected in the tailtip and a small area located at the midbrain/hindbrain boundary.

It is found in the nucleus. Its function is as follows. Transcriptional repressor. The polypeptide is Forkhead box protein D5-C (foxd5-c) (Xenopus laevis (African clawed frog)).